The primary structure comprises 274 residues: 3-methyl-2-oxobutanoate hydroxymethyltransferase (274 aa).

Residues aspartate 49 and aspartate 88 each coordinate Mg(2+). 3-methyl-2-oxobutanoate contacts are provided by residues 49–50 (DS), aspartate 88, and lysine 118. Glutamate 120 provides a ligand contact to Mg(2+). Glutamate 187 serves as the catalytic Proton acceptor.

This sequence belongs to the PanB family. Homodecamer; pentamer of dimers. Mg(2+) serves as cofactor.

The protein resides in the cytoplasm. It catalyses the reaction 3-methyl-2-oxobutanoate + (6R)-5,10-methylene-5,6,7,8-tetrahydrofolate + H2O = 2-dehydropantoate + (6S)-5,6,7,8-tetrahydrofolate. It functions in the pathway cofactor biosynthesis; (R)-pantothenate biosynthesis; (R)-pantoate from 3-methyl-2-oxobutanoate: step 1/2. In terms of biological role, catalyzes the reversible reaction in which hydroxymethyl group from 5,10-methylenetetrahydrofolate is transferred onto alpha-ketoisovalerate to form ketopantoate. This chain is 3-methyl-2-oxobutanoate hydroxymethyltransferase, found in Rhodopseudomonas palustris (strain HaA2).